Consider the following 407-residue polypeptide: Multifunctional CCA protein (407 aa).

2 residues coordinate ATP: Gly-8 and Arg-11. The CTP site is built by Gly-8 and Arg-11. 2 residues coordinate Mg(2+): Asp-21 and Asp-23. ATP is bound by residues Arg-91, Arg-137, and Arg-140. 3 residues coordinate CTP: Arg-91, Arg-137, and Arg-140. The 102-residue stretch at 228–329 folds into the HD domain; that stretch reads TGIHTLLVAE…VKIFNKLDVW (102 aa).

It belongs to the tRNA nucleotidyltransferase/poly(A) polymerase family. Bacterial CCA-adding enzyme type 1 subfamily. Monomer. Can also form homodimers and oligomers. Requires Mg(2+) as cofactor. It depends on Ni(2+) as a cofactor.

The enzyme catalyses a tRNA precursor + 2 CTP + ATP = a tRNA with a 3' CCA end + 3 diphosphate. The catalysed reaction is a tRNA with a 3' CCA end + 2 CTP + ATP = a tRNA with a 3' CCACCA end + 3 diphosphate. Functionally, catalyzes the addition and repair of the essential 3'-terminal CCA sequence in tRNAs without using a nucleic acid template. Adds these three nucleotides in the order of C, C, and A to the tRNA nucleotide-73, using CTP and ATP as substrates and producing inorganic pyrophosphate. tRNA 3'-terminal CCA addition is required both for tRNA processing and repair. Also involved in tRNA surveillance by mediating tandem CCA addition to generate a CCACCA at the 3' terminus of unstable tRNAs. While stable tRNAs receive only 3'-terminal CCA, unstable tRNAs are marked with CCACCA and rapidly degraded. In Vibrio vulnificus (strain CMCP6), this protein is Multifunctional CCA protein.